We begin with the raw amino-acid sequence, 134 residues long: DNA-binding protein H-NS (134 aa).

The DNA-binding element occupies 111-116 (QGRTLA).

The protein belongs to the histone-like protein H-NS family. Homodimer that oligomerizes on DNA into higher-order complexes that form bridges between disparate regions of DNA compacting it. Interacts with YmoA and other similar proteins.

It is found in the cytoplasm. The protein resides in the nucleoid. Functionally, a DNA-binding protein implicated in transcriptional repression and chromosome organization and compaction. Binds nucleation sites in AT-rich DNA and bridges them, forming higher-order nucleoprotein complexes and condensing the chromosome. As many horizontally transferred genes are AT-rich, it plays a central role in silencing foreign genes. A subset of genes are repressed by H-NS in association with other proteins. This chain is DNA-binding protein H-NS (hns), found in Proteus vulgaris.